Consider the following 165-residue polypeptide: Protein YELLOW LEAF 1, choloroplastic (165 aa).

Residues 1 to 51 (MPPLATMSSPGSLLLLTPAVYQGIGRNRGGQSQEGQSISSSRSLKTKLSVS) constitute a chloroplast transit peptide. The disordered stretch occupies residues 71–118 (TQTARRKSFSGPTSPPSGSVKEKVRSPKLDDGGTGFPPFRFGGGGGGG). Residues 79–89 (FSGPTSPPSGS) show a composition bias toward low complexity. Positions 90 to 101 (VKEKVRSPKLDD) are enriched in basic and acidic residues.

Interacts with atpB. Highly expressed in leaves. Expressed in leaf sheaths. Expressed at low levels in stems.

The protein localises to the plastid. Its subcellular location is the chloroplast. Functionally, required for photosynthetic protein complex assembly in chloroplast thylakoid membranes during leaf development. Maintains the abundance of the core protein complex PsaA-PsaB of photosystem I (PSI) in the thylakoid membrane. May play a role in the efficient biogenesis of the chloroplast ATP synthase complex, possibly by interacting with the beta subunit atpB. The polypeptide is Protein YELLOW LEAF 1, choloroplastic (Oryza sativa subsp. japonica (Rice)).